The sequence spans 371 residues: Spermatogenic leucine zipper protein 1 (371 aa).

2 coiled-coil regions span residues 96–148 (EVSE…TVQD) and 177–289 (FPHI…QKEE). The residue at position 98 (S98) is a Phosphoserine. The interval 110-120 (INKELVKKLLA) is helix-loop-helix motif. The basic motif stretch occupies residues 121 to 188 (SLDLGKKENA…HIQEENIRLR (68 aa)). S202 carries the phosphoserine modification. Residues 223–240 (KTLKNNGTHSPTQTNNES) show a composition bias toward polar residues. Residues 223 to 246 (KTLKNNGTHSPTQTNNESAKQELE) are disordered. The segment at 245–266 (LEEQVKRLKEDTYSLHLIATLL) is leucine-zipper.

Phosphorylated by MAPK1/ERK2 and MAPK3/ERK1.

It localises to the cytoplasm. The protein localises to the nucleus. Functionally, transcription factor that binds to the DNA sequence 5'-CANNTG-3'(E box) and the G-box motif. May play an important role in the regulation of cell proliferation and differentiation during spermatogenesis. In Bos taurus (Bovine), this protein is Spermatogenic leucine zipper protein 1 (SPZ1).